The sequence spans 351 residues: sn-glycerol-3-phosphate import ATP-binding protein UgpC (351 aa).

In terms of domain architecture, ABC transporter spans 4 to 234 (ITLKDLVKSY…PATLFVAGFI (231 aa)). 36–43 (GPSGCGKS) provides a ligand contact to ATP.

Belongs to the ABC transporter superfamily. sn-glycerol-3-phosphate importer (TC 3.A.1.1.3) family. In terms of assembly, the complex is composed of two ATP-binding proteins (UgpC), two transmembrane proteins (UgpA and UgpE) and a solute-binding protein (UgpB).

The protein resides in the cell inner membrane. The catalysed reaction is sn-glycerol 3-phosphate(out) + ATP + H2O = sn-glycerol 3-phosphate(in) + ADP + phosphate + H(+). Functionally, part of the ABC transporter complex UgpBAEC involved in sn-glycerol-3-phosphate (G3P) import. Responsible for energy coupling to the transport system. This Ruegeria sp. (strain TM1040) (Silicibacter sp.) protein is sn-glycerol-3-phosphate import ATP-binding protein UgpC.